The following is a 130-amino-acid chain: Small ribosomal subunit protein uS9 (130 aa).

This sequence belongs to the universal ribosomal protein uS9 family.

The protein is Small ribosomal subunit protein uS9 of Streptococcus uberis (strain ATCC BAA-854 / 0140J).